The primary structure comprises 63 residues: Large ribosomal subunit protein bL28 (63 aa).

This sequence belongs to the bacterial ribosomal protein bL28 family.

In Clostridium perfringens (strain ATCC 13124 / DSM 756 / JCM 1290 / NCIMB 6125 / NCTC 8237 / Type A), this protein is Large ribosomal subunit protein bL28.